The sequence spans 203 residues: MDYFPMIIALLFVAFQGAPETAVLGAELSPEAESQGETPSPHASWRPRRSKRCSCSSLMDKECVYFCHLDIIWVNTPEHIVPYGLGSPSRSRRSLKDLFPAKAADRRDRCQCASQKDKKCWSFCQAGKEIGRDQDTMEKRWDNQKKGTDCSKLGEKCIHRQLVMGRKIRRLEAISNSIKTSFHIAKLKAELYRDKKVTHNRTH.

The first 25 residues, 1–25 (MDYFPMIIALLFVAFQGAPETAVLG), serve as a signal peptide directing secretion. A propeptide spanning residues 26-50 (AELSPEAESQGETPSPHASWRPRRS) is cleaved from the precursor. Positions 27–48 (ELSPEAESQGETPSPHASWRPR) are disordered. Cystine bridges form between C53–C67 and C55–C63. The propeptide occupies 83–203 (YGLGSPSRSR…DKKVTHNRTH (121 aa)). The tract at residues 110 to 124 (CQCASQKDKKCWSFC) is endothelin-like. Residue N200 is glycosylated (N-linked (GlcNAc...) asparagine).

This sequence belongs to the endothelin/sarafotoxin family.

The protein resides in the secreted. Its function is as follows. Endothelins are endothelium-derived vasoconstrictor peptides. Probable ligand for G-protein coupled receptors EDNRA and EDNRB which activates PTK2B, BCAR1, BCAR3 and, GTPases RAP1 and RHOA cascade in glomerular mesangial cells. Also binds the DEAR/FBXW7-AS1 receptor. Promotes mesenteric arterial wall remodeling via activation of ROCK signaling and subsequent colocalization of NFATC3 with F-actin filaments. NFATC3 then translocates to the nucleus where it subsequently promotes the transcription of the smooth muscle hypertrophy and differentiation marker ACTA2. This Sus scrofa (Pig) protein is Endothelin-1 (EDN1).